A 298-amino-acid polypeptide reads, in one-letter code: Type II methyltransferase M.MjaIV (298 aa).

It carries out the reaction a 2'-deoxyadenosine in DNA + S-adenosyl-L-methionine = an N(6)-methyl-2'-deoxyadenosine in DNA + S-adenosyl-L-homocysteine + H(+). In terms of biological role, a methylase that recognizes the double-stranded sequence 5'-GTNNAC-3', methylates A-5 on both strands, and protects the DNA from cleavage by the MjaIV endonuclease. The protein is Type II methyltransferase M.MjaIV (mjaIVMP) of Methanocaldococcus jannaschii (strain ATCC 43067 / DSM 2661 / JAL-1 / JCM 10045 / NBRC 100440) (Methanococcus jannaschii).